The following is a 214-amino-acid chain: Cytochrome b (214 aa).

Helical transmembrane passes span 31–51, 75–96, 111–131, and 176–196; these read FGSMLLICLMLQTLTGFFLAI, WTMQNLHAISASLFFICIYIHI, WLSGVTLLFTLMATAFFGYVL, and FFALHFILPFIIISLSSAHIM. Residues H81 and H95 each coordinate heme b. Heme b contacts are provided by H180 and H194. H199 is an a ubiquinone binding site.

Belongs to the cytochrome b family. As to quaternary structure, the cytochrome bc1 complex contains 3 respiratory subunits (MT-CYB, CYC1 and UQCRFS1), 2 core proteins (UQCRC1 and UQCRC2) and probably 6 low-molecular weight proteins. The cofactor is heme b.

It localises to the mitochondrion inner membrane. Its function is as follows. Component of the ubiquinol-cytochrome c reductase complex (complex III or cytochrome b-c1 complex) that is part of the mitochondrial respiratory chain. The b-c1 complex mediates electron transfer from ubiquinol to cytochrome c. Contributes to the generation of a proton gradient across the mitochondrial membrane that is then used for ATP synthesis. The polypeptide is Cytochrome b (MT-CYB) (Elapsoidea semiannulata (Angolan garter snake)).